Here is a 935-residue protein sequence, read N- to C-terminus: Pre-mRNA-splicing factor CWC22 homolog (935 aa).

Residues Met-1–Gly-179 are disordered. 2 stretches are compositionally biased toward basic and acidic residues: residues Val-13–Ser-25 and Glu-49–Met-70. Basic residues predominate over residues Gln-84–Val-148. Residues Pro-159–Arg-175 are compositionally biased toward basic and acidic residues. The MIF4G domain maps to Lys-212 to Lys-400. The segment at Ala-463–Thr-489 is disordered. Residues Ile-465 to Glu-483 are compositionally biased toward acidic residues. An MI domain is found at Ala-502 to Met-633. A disordered region spans residues Lys-725–His-935. The span at Ser-729–Asp-763 shows a compositional bias: low complexity. Composition is skewed to basic and acidic residues over residues Lys-780 to Glu-891 and Asp-897 to His-935.

Belongs to the CWC22 family.

The protein localises to the nucleus. It is found in the nucleus speckle. Its function is as follows. Required for early embryogenesis and tissue differentiation. Required for pre-mRNA splicing and for exon-junction complex (EJC) assembly. Hinders EIF4A3 from non-specifically binding RNA and escorts it to the splicing machinery to promote EJC assembly on mature mRNAs. Through its role in EJC assembly, required for nonsense-mediated mRNA decay. In Caenorhabditis briggsae, this protein is Pre-mRNA-splicing factor CWC22 homolog.